The following is a 197-amino-acid chain: Adenylyl-sulfate kinase (197 aa).

33–40 (GLSGSGKS) lines the ATP pocket. The active-site Phosphoserine intermediate is the S107.

It belongs to the APS kinase family.

The enzyme catalyses adenosine 5'-phosphosulfate + ATP = 3'-phosphoadenylyl sulfate + ADP + H(+). It functions in the pathway sulfur metabolism; hydrogen sulfide biosynthesis; sulfite from sulfate: step 2/3. Functionally, catalyzes the synthesis of activated sulfate. The chain is Adenylyl-sulfate kinase from Bacillus velezensis (strain DSM 23117 / BGSC 10A6 / LMG 26770 / FZB42) (Bacillus amyloliquefaciens subsp. plantarum).